The chain runs to 456 residues: Ribosomal protein uS12 methylthiotransferase RimO (456 aa).

The MTTase N-terminal domain maps to 11-126; sequence PKVGFVSLGC…VMQAVHTHLP (116 aa). Positions 20, 56, 85, 157, 161, and 164 each coordinate [4Fe-4S] cluster. Positions 143–384 constitute a Radical SAM core domain; sequence LTPKHYAYLK…MEVAEEVSAR (242 aa). A TRAM domain is found at 387–456; sequence QRKVGQTLRV…DGHDLWGEVA (70 aa).

This sequence belongs to the methylthiotransferase family. RimO subfamily. [4Fe-4S] cluster is required as a cofactor.

Its subcellular location is the cytoplasm. It carries out the reaction L-aspartate(89)-[ribosomal protein uS12]-hydrogen + (sulfur carrier)-SH + AH2 + 2 S-adenosyl-L-methionine = 3-methylsulfanyl-L-aspartate(89)-[ribosomal protein uS12]-hydrogen + (sulfur carrier)-H + 5'-deoxyadenosine + L-methionine + A + S-adenosyl-L-homocysteine + 2 H(+). In terms of biological role, catalyzes the methylthiolation of an aspartic acid residue of ribosomal protein uS12. The protein is Ribosomal protein uS12 methylthiotransferase RimO of Cupriavidus metallidurans (strain ATCC 43123 / DSM 2839 / NBRC 102507 / CH34) (Ralstonia metallidurans).